A 459-amino-acid chain; its full sequence is Endoglucanase EG-1 (459 aa).

Residues 1–22 (MAPSVTLPLTTAILAIARLVAA) form the signal peptide. Q23 carries the post-translational modification Pyrrolidone carboxylic acid. Residues 23 to 397 (QQPGTSTPEV…DIGSTTNSTA (375 aa)) form a catalytic region. 8 cysteine pairs are disulfide-bonded: C41–C47, C71–C92, C82–C88, C161–C360, C193–C216, C197–C215, C236–C241, and C246–C315. A glycan (N-linked (GlcNAc) asparagine) is linked at N78. Residue N204 is glycosylated (N-linked (GlcNAc...) (high mannose) asparagine). Catalysis depends on E218, which acts as the Nucleophile. E223 functions as the Proton donor/acceptor in the catalytic mechanism. The segment at 390–425 (GSTTNSTAPPPPPASSTTFSTTRRSSTTSSSPSCTQ) is disordered. The N-linked (GlcNAc...) asparagine glycan is linked to N394. Residues 398–423 (PPPPPASSTTFSTTRRSSTTSSSPSC) form a linker region. Over residues 404–425 (SSTTFSTTRRSSTTSSSPSCTQ) the composition is skewed to low complexity. Intrachain disulfides connect C423–C439, C431–C448, and C442–C458. In terms of domain architecture, CBM1 spans 423 to 459 (CTQTHWGQCGGIGYSGCKTCTSGTTCQYSNDYYSQCL).

It belongs to the glycosyl hydrolase 7 (cellulase C) family. Post-translationally, asn-204 contains mainly a high-mannose-type glycan (Hex(7-9)GlcNAc(2)), with a small fraction (8%) bearing a single GlcNAc at this site.

It is found in the secreted. It carries out the reaction Endohydrolysis of (1-&gt;4)-beta-D-glucosidic linkages in cellulose, lichenin and cereal beta-D-glucans.. Its function is as follows. Endoglucanase (EG) that cleaves the internal beta-1,4-glucosidic bonds in cellulose. The degradation of cellulose involves an interplay between different cellulolytic enzymes. Hydrolysis starts with EGs, which cut internal glycosidic linkages to reduce the polymerization degree of the substrate and creates new chain ends for exocellobiohydrolases (CBHs). The CBH release the disaccharide cellobiose from the non-reducing end of the cellulose polymer chain. Finally, beta-1,4-glucosidases hydrolyze the cellobiose and other short cello-oligosaccharides into glucose units. This is Endoglucanase EG-1 (egl1) from Hypocrea jecorina (Trichoderma reesei).